Consider the following 169-residue polypeptide: Cell division inhibitor SulA (169 aa).

Residues 106–112 are ftsZ binding; that stretch reads ALRTGNY. The interval 162 to 169 is lon protease binding; the sequence is KIHSNLYH.

This sequence belongs to the SulA family. As to quaternary structure, interacts with FtsZ. Is rapidly cleaved and degraded by the Lon protease once DNA damage is repaired.

In terms of biological role, component of the SOS system and an inhibitor of cell division. Accumulation of SulA causes rapid cessation of cell division and the appearance of long, non-septate filaments. In the presence of GTP, binds a polymerization-competent form of FtsZ in a 1:1 ratio, thus inhibiting FtsZ polymerization and therefore preventing it from participating in the assembly of the Z ring. This mechanism prevents the premature segregation of damaged DNA to daughter cells during cell division. This Salmonella agona (strain SL483) protein is Cell division inhibitor SulA.